A 218-amino-acid polypeptide reads, in one-letter code: Protein-L-isoaspartate O-methyltransferase (218 aa).

The active site involves Ser60.

The protein belongs to the methyltransferase superfamily. L-isoaspartyl/D-aspartyl protein methyltransferase family.

It localises to the cytoplasm. The enzyme catalyses [protein]-L-isoaspartate + S-adenosyl-L-methionine = [protein]-L-isoaspartate alpha-methyl ester + S-adenosyl-L-homocysteine. Its function is as follows. Catalyzes the methyl esterification of L-isoaspartyl residues in peptides and proteins that result from spontaneous decomposition of normal L-aspartyl and L-asparaginyl residues. It plays a role in the repair and/or degradation of damaged proteins. This chain is Protein-L-isoaspartate O-methyltransferase, found in Roseiflexus sp. (strain RS-1).